The primary structure comprises 463 residues: L-seryl-tRNA(Sec) selenium transferase (463 aa).

Residue Lys295 is modified to N6-(pyridoxal phosphate)lysine.

The protein belongs to the SelA family. Homodecamer; pentamer of dimers. Binds only one seryl-tRNA(Sec) per dimer. It depends on pyridoxal 5'-phosphate as a cofactor.

It is found in the cytoplasm. The enzyme catalyses L-seryl-tRNA(Sec) + selenophosphate + H(+) = L-selenocysteinyl-tRNA(Sec) + phosphate. It participates in aminoacyl-tRNA biosynthesis; selenocysteinyl-tRNA(Sec) biosynthesis; selenocysteinyl-tRNA(Sec) from L-seryl-tRNA(Sec) (bacterial route): step 1/1. Converts seryl-tRNA(Sec) to selenocysteinyl-tRNA(Sec) required for selenoprotein biosynthesis. The polypeptide is L-seryl-tRNA(Sec) selenium transferase (Shigella boydii serotype 18 (strain CDC 3083-94 / BS512)).